We begin with the raw amino-acid sequence, 326 residues long: Phosphate acyltransferase (326 aa).

This sequence belongs to the PlsX family. As to quaternary structure, homodimer. Probably interacts with PlsY.

It is found in the cytoplasm. It carries out the reaction a fatty acyl-[ACP] + phosphate = an acyl phosphate + holo-[ACP]. It functions in the pathway lipid metabolism; phospholipid metabolism. Functionally, catalyzes the reversible formation of acyl-phosphate (acyl-PO(4)) from acyl-[acyl-carrier-protein] (acyl-ACP). This enzyme utilizes acyl-ACP as fatty acyl donor, but not acyl-CoA. This Petrotoga mobilis (strain DSM 10674 / SJ95) protein is Phosphate acyltransferase.